A 329-amino-acid chain; its full sequence is Phenylalanine--tRNA ligase alpha subunit (329 aa).

Residue Glu-254 participates in Mg(2+) binding.

Belongs to the class-II aminoacyl-tRNA synthetase family. Phe-tRNA synthetase alpha subunit type 1 subfamily. In terms of assembly, tetramer of two alpha and two beta subunits. Requires Mg(2+) as cofactor.

Its subcellular location is the cytoplasm. It carries out the reaction tRNA(Phe) + L-phenylalanine + ATP = L-phenylalanyl-tRNA(Phe) + AMP + diphosphate + H(+). This chain is Phenylalanine--tRNA ligase alpha subunit (pheS), found in Haemophilus influenzae (strain ATCC 51907 / DSM 11121 / KW20 / Rd).